The primary structure comprises 396 residues: Tryptophan synthase beta chain (396 aa).

Lysine 86 carries the post-translational modification N6-(pyridoxal phosphate)lysine.

It belongs to the TrpB family. In terms of assembly, tetramer of two alpha and two beta chains. It depends on pyridoxal 5'-phosphate as a cofactor.

It catalyses the reaction (1S,2R)-1-C-(indol-3-yl)glycerol 3-phosphate + L-serine = D-glyceraldehyde 3-phosphate + L-tryptophan + H2O. It participates in amino-acid biosynthesis; L-tryptophan biosynthesis; L-tryptophan from chorismate: step 5/5. In terms of biological role, the beta subunit is responsible for the synthesis of L-tryptophan from indole and L-serine. The protein is Tryptophan synthase beta chain of Blochmanniella pennsylvanica (strain BPEN).